The chain runs to 330 residues: Aspartate--ammonia ligase (330 aa).

Belongs to the class-II aminoacyl-tRNA synthetase family. AsnA subfamily.

It is found in the cytoplasm. It carries out the reaction L-aspartate + NH4(+) + ATP = L-asparagine + AMP + diphosphate + H(+). Its pathway is amino-acid biosynthesis; L-asparagine biosynthesis; L-asparagine from L-aspartate (ammonia route): step 1/1. The protein is Aspartate--ammonia ligase of Haemophilus influenzae (strain 86-028NP).